The sequence spans 108 residues: Large ribosomal subunit protein uL23 (108 aa).

It belongs to the universal ribosomal protein uL23 family. Part of the 50S ribosomal subunit. Contacts protein L29, and trigger factor when it is bound to the ribosome.

One of the early assembly proteins it binds 23S rRNA. One of the proteins that surrounds the polypeptide exit tunnel on the outside of the ribosome. Forms the main docking site for trigger factor binding to the ribosome. The protein is Large ribosomal subunit protein uL23 of Polaromonas naphthalenivorans (strain CJ2).